The sequence spans 548 residues: Chaperonin GroEL (548 aa).

ATP-binding positions include 30–33 (TLGP), Lys-51, 87–91 (DGTTT), Gly-415, 479–481 (NAA), and Asp-495.

This sequence belongs to the chaperonin (HSP60) family. In terms of assembly, forms a cylinder of 14 subunits composed of two heptameric rings stacked back-to-back. Interacts with the co-chaperonin GroES.

The protein resides in the cytoplasm. The catalysed reaction is ATP + H2O + a folded polypeptide = ADP + phosphate + an unfolded polypeptide.. Together with its co-chaperonin GroES, plays an essential role in assisting protein folding. The GroEL-GroES system forms a nano-cage that allows encapsulation of the non-native substrate proteins and provides a physical environment optimized to promote and accelerate protein folding. This chain is Chaperonin GroEL, found in Proteus mirabilis (strain HI4320).